A 207-amino-acid polypeptide reads, in one-letter code: Granulocyte colony-stimulating factor (207 aa).

The first 30 residues, methionine 1 to alanine 30, serve as a signal peptide directing secretion. Intrachain disulfides connect cysteine 69–cysteine 75 and cysteine 97–cysteine 107. An O-linked (GalNAc...) threonine glycan is attached at threonine 166.

Belongs to the IL-6 superfamily. Monomer. Post-translationally, O-glycan consists of Gal-GalNAc disaccharide which can be modified with up to two sialic acid residues (done in recombinantly expressed G-CSF from CHO cells).

It is found in the secreted. Its function is as follows. Granulocyte/macrophage colony-stimulating factors are cytokines that act in hematopoiesis by controlling the production, differentiation, and function of 2 related white cell populations of the blood, the granulocytes and the monocytes-macrophages. This CSF induces granulocytes. This chain is Granulocyte colony-stimulating factor (CSF3), found in Homo sapiens (Human).